The chain runs to 292 residues: Protein LRATD1 (292 aa).

Serine 38 is modified (phosphoserine). The LRAT domain maps to 133 to 228; sequence PAPEPPAPAP…CRFGKREFKA (96 aa).

The protein belongs to the LRATD family. In terms of tissue distribution, only detected in testis. Highly expressed in colon cancer cells.

It localises to the cytoplasm. Its function is as follows. May play a role in cell morphology and motility. The chain is Protein LRATD1 from Homo sapiens (Human).